The primary structure comprises 466 residues: Amidase (466 aa).

Active-site charge relay system residues include Lys-79 and Ser-148. The disordered stretch occupies residues 128 to 152; it reads YGRITPKSRNPRDPGRTPGGSSGGS. Catalysis depends on Ser-172, which acts as the Acyl-ester intermediate.

This sequence belongs to the amidase family.

The enzyme catalyses a monocarboxylic acid amide + H2O = a monocarboxylate + NH4(+). The sequence is that of Amidase from Pseudomonas putida (Arthrobacter siderocapsulatus).